The primary structure comprises 339 residues: DNA-directed RNA polymerase subunit alpha (339 aa).

An alpha N-terminal domain (alpha-NTD) region spans residues 1 to 235 (MVREEVAVST…DLFIPFLHGE (235 aa)). The segment at 267 to 339 (KAIALECIFI…FTIDLPKNKF (73 aa)) is alpha C-terminal domain (alpha-CTD).

Belongs to the RNA polymerase alpha chain family. In plastids the minimal PEP RNA polymerase catalytic core is composed of four subunits: alpha, beta, beta', and beta''. When a (nuclear-encoded) sigma factor is associated with the core the holoenzyme is formed, which can initiate transcription.

It is found in the plastid. The protein localises to the chloroplast. It catalyses the reaction RNA(n) + a ribonucleoside 5'-triphosphate = RNA(n+1) + diphosphate. Functionally, DNA-dependent RNA polymerase catalyzes the transcription of DNA into RNA using the four ribonucleoside triphosphates as substrates. This Drimys granadensis protein is DNA-directed RNA polymerase subunit alpha.